We begin with the raw amino-acid sequence, 227 residues long: Apoptosis regulator OPG045 (227 aa).

Belongs to the orthopoxvirus OPG045 family. In terms of assembly, homodimer. Interacts with host pro-apoptotic protein BCL2L11 (via BH3 domain). Interacts with host NLRP1. Interacts with host BAK.

It is found in the host mitochondrion outer membrane. The protein resides in the host cytoplasm. Its function is as follows. Plays a role in evading host innate immune response by inhibiting host inflammasome activation. Interacts with and inhibits NLR-mediated interleukin-1 beta/IL1B production in infected cells. At the host mitochondria outer membrane, interacts with the BH3 domain of host BAK and prevents BAK from binding active BAX. In turn, host apoptosis is inhibited. This is Apoptosis regulator OPG045 (OPG045) from Oryctolagus cuniculus (Rabbit).